A 503-amino-acid polypeptide reads, in one-letter code: Aminoaldehyde dehydrogenase 1, peroxisomal (503 aa).

Asn-27, Ile-28, Asp-99, and Leu-189 together coordinate Na(+). 238–245 contributes to the NAD(+) binding site; it reads GSSATGSK. Catalysis depends on Glu-260, which acts as the Proton acceptor. NAD(+)-binding residues include Cys-294 and Glu-393. Catalysis depends on Cys-294, which acts as the Nucleophile. The Microbody targeting signal motif lies at 501–503; that stretch reads SKL.

The protein belongs to the aldehyde dehydrogenase family. As to quaternary structure, forms homodimers.

It is found in the peroxisome. It catalyses the reaction 3-aminopropanal + NAD(+) + H2O = beta-alanine + NADH + 2 H(+). The enzyme catalyses 4-aminobutanal + NAD(+) + H2O = 4-aminobutanoate + NADH + 2 H(+). It carries out the reaction 4-guanidinobutanal + NAD(+) + H2O = 4-guanidinobutanoate + NADH + 2 H(+). It functions in the pathway amine and polyamine biosynthesis; betaine biosynthesis via choline pathway; betaine from betaine aldehyde: step 1/1. Dehydrogenase that catalyzes the oxidation of several aminoaldehydes. Metabolizes and detoxifies aldehyde products of polyamine degradation to non-toxic amino acids. Catalyzes the oxidation of 3-aminopropanal to beta-alanine. Catalyzes the oxidation of 4-aminobutanal to 4-aminobutanoate. Catalyzes the oxidation of 4-guanidinobutanal to 4-guanidinobutanoate. The protein is Aminoaldehyde dehydrogenase 1, peroxisomal of Pisum sativum (Garden pea).